The primary structure comprises 565 residues: NAD-dependent malic enzyme (565 aa).

Catalysis depends on tyrosine 104, which acts as the Proton donor. Arginine 157 contributes to the NAD(+) binding site. Lysine 175 acts as the Proton acceptor in catalysis. 3 residues coordinate a divalent metal cation: glutamate 246, aspartate 247, and aspartate 270. NAD(+) contacts are provided by aspartate 270 and asparagine 418.

This sequence belongs to the malic enzymes family. In terms of assembly, homotetramer. Mg(2+) serves as cofactor. It depends on Mn(2+) as a cofactor.

The enzyme catalyses (S)-malate + NAD(+) = pyruvate + CO2 + NADH. It catalyses the reaction oxaloacetate + H(+) = pyruvate + CO2. The sequence is that of NAD-dependent malic enzyme from Edwardsiella ictaluri (strain 93-146).